The chain runs to 220 residues: Ribose-5-phosphate isomerase A (220 aa).

Residues Thr28–Thr31, Asp81–Asp84, and Lys94–Gly97 each bind substrate. Residue Glu103 is the Proton acceptor of the active site. Lys121 lines the substrate pocket.

Belongs to the ribose 5-phosphate isomerase family. As to quaternary structure, homodimer.

It catalyses the reaction aldehydo-D-ribose 5-phosphate = D-ribulose 5-phosphate. Its pathway is carbohydrate degradation; pentose phosphate pathway; D-ribose 5-phosphate from D-ribulose 5-phosphate (non-oxidative stage): step 1/1. In terms of biological role, catalyzes the reversible conversion of ribose-5-phosphate to ribulose 5-phosphate. This is Ribose-5-phosphate isomerase A from Shewanella putrefaciens (strain CN-32 / ATCC BAA-453).